Reading from the N-terminus, the 117-residue chain is uncharacterized protein (117 aa).

This is an uncharacterized protein from Homo sapiens (Human).